The chain runs to 359 residues: Probable dual-specificity RNA methyltransferase RlmN (359 aa).

The active-site Proton acceptor is Glu91. The Radical SAM core domain occupies 97-329 (QHYGHSVCVT…KKNGVNCVVR (233 aa)). Cys104 and Cys340 are joined by a disulfide. 3 residues coordinate [4Fe-4S] cluster: Cys111, Cys115, and Cys118. Residues 163–164 (GE), Ser195, 218–220 (SLH), and Asn296 contribute to the S-adenosyl-L-methionine site. Catalysis depends on Cys340, which acts as the S-methylcysteine intermediate.

This sequence belongs to the radical SAM superfamily. RlmN family. It depends on [4Fe-4S] cluster as a cofactor.

Its subcellular location is the cytoplasm. It carries out the reaction adenosine(2503) in 23S rRNA + 2 reduced [2Fe-2S]-[ferredoxin] + 2 S-adenosyl-L-methionine = 2-methyladenosine(2503) in 23S rRNA + 5'-deoxyadenosine + L-methionine + 2 oxidized [2Fe-2S]-[ferredoxin] + S-adenosyl-L-homocysteine. It catalyses the reaction adenosine(37) in tRNA + 2 reduced [2Fe-2S]-[ferredoxin] + 2 S-adenosyl-L-methionine = 2-methyladenosine(37) in tRNA + 5'-deoxyadenosine + L-methionine + 2 oxidized [2Fe-2S]-[ferredoxin] + S-adenosyl-L-homocysteine. Its function is as follows. Specifically methylates position 2 of adenine 2503 in 23S rRNA and position 2 of adenine 37 in tRNAs. The protein is Probable dual-specificity RNA methyltransferase RlmN of Streptococcus pyogenes serotype M5 (strain Manfredo).